Here is a 285-residue protein sequence, read N- to C-terminus: Polyamine aminopropyltransferase (285 aa).

Residues 5 to 241 enclose the PABS domain; the sequence is DNWYIEHFQP…GWWSVTMASK (237 aa). S-methyl-5'-thioadenosine is bound at residue Gln35. Residues His66 and Asp90 each contribute to the spermidine site. Residues Asp110 and 141-142 contribute to the S-methyl-5'-thioadenosine site; that span reads DG. The active-site Proton acceptor is Asp160. Spermidine is bound at residue 160-163; it reads DSTD. Residue Pro167 coordinates S-methyl-5'-thioadenosine.

This sequence belongs to the spermidine/spermine synthase family. Homodimer or homotetramer.

The protein resides in the cytoplasm. The enzyme catalyses S-adenosyl 3-(methylsulfanyl)propylamine + putrescine = S-methyl-5'-thioadenosine + spermidine + H(+). The protein operates within amine and polyamine biosynthesis; spermidine biosynthesis; spermidine from putrescine: step 1/1. Its function is as follows. Catalyzes the irreversible transfer of a propylamine group from the amino donor S-adenosylmethioninamine (decarboxy-AdoMet) to putrescine (1,4-diaminobutane) to yield spermidine. The polypeptide is Polyamine aminopropyltransferase (Xanthomonas euvesicatoria pv. vesicatoria (strain 85-10) (Xanthomonas campestris pv. vesicatoria)).